The primary structure comprises 256 residues: Ciliary microtubule associated protein 1A (256 aa).

3 STPGR repeats span residues Pro-66 to Arg-92, Pro-181 to Arg-206, and Pro-217 to Arg-242.

It belongs to the CIMAP family.

The protein localises to the cytoplasm. Its subcellular location is the cytoskeleton. It is found in the flagellum axoneme. Outer dense fibers are filamentous structures located on the outside of the axoneme in the midpiece and principal piece of the mammalian sperm tail. May help to maintain the passive elastic structures and elastic recoil of the sperm tail. This Xenopus tropicalis (Western clawed frog) protein is Ciliary microtubule associated protein 1A (cimap1a).